Here is a 505-residue protein sequence, read N- to C-terminus: Megakaryocyte-associated tyrosine-protein kinase (505 aa).

The region spanning 46 to 108 is the SH3 domain; sequence APGTQCMTKC…AAAALRHGEA (63 aa). Residues 120–209 form the SH2 domain; the sequence is WFHGKISGQE…AICTKLVKPR (90 aa). The Protein kinase domain occupies 233–481; the sequence is LTLGAQIGEG…IVEKLGRELR (249 aa). ATP contacts are provided by residues 239–247 and K260; that span reads IGEGEFGAV. The active-site Proton acceptor is the D350. A disordered region spans residues 483 to 505; sequence VGVSAPAGGQEAEGSAPTRSQDP.

Belongs to the protein kinase superfamily. Tyr protein kinase family. CSK subfamily. In terms of assembly, interacts with KIT. As to expression, most abundant in brain, and to a lesser extent in the spleen, the thymus and the liver. Also found in the T-cell lineage.

The protein resides in the cytoplasm. The protein localises to the membrane. The enzyme catalyses L-tyrosyl-[protein] + ATP = O-phospho-L-tyrosyl-[protein] + ADP + H(+). Its function is as follows. Could play a significant role in the signal transduction of hematopoietic cells. May regulate tyrosine kinase activity of SRC-family members in brain by specifically phosphorylating their C-terminal regulatory tyrosine residue which acts as a negative regulatory site. It may play an inhibitory role in the control of T-cell proliferation. The protein is Megakaryocyte-associated tyrosine-protein kinase (Matk) of Mus musculus (Mouse).